The following is a 94-amino-acid chain: Cell division protein FtsB (94 aa).

Residues 1 to 3 (MRT) are Cytoplasmic-facing. The chain crosses the membrane as a helical span at residues 4-21 (FAIFLLIALGWLQYTLWF). Residues 22–94 (GKNGMSDYAQ…YRIIDENSEG (73 aa)) lie on the Periplasmic side of the membrane. Residues 33–71 (SNDVALQEEVNQGLRNRNEQMFAEIDDLKKGSEAIEERA) adopt a coiled-coil conformation.

It belongs to the FtsB family. In terms of assembly, part of a complex composed of FtsB, FtsL and FtsQ.

The protein localises to the cell inner membrane. Functionally, essential cell division protein. May link together the upstream cell division proteins, which are predominantly cytoplasmic, with the downstream cell division proteins, which are predominantly periplasmic. This Aliivibrio fischeri (strain ATCC 700601 / ES114) (Vibrio fischeri) protein is Cell division protein FtsB.